The chain runs to 82 residues: Small ribosomal subunit protein bS16c (82 aa).

Belongs to the bacterial ribosomal protein bS16 family.

The protein localises to the plastid. The protein resides in the chloroplast. In Pyropia yezoensis (Susabi-nori), this protein is Small ribosomal subunit protein bS16c.